Reading from the N-terminus, the 459-residue chain is Exodeoxyribonuclease 7 large subunit (459 aa).

Belongs to the XseA family. As to quaternary structure, heterooligomer composed of large and small subunits.

Its subcellular location is the cytoplasm. It carries out the reaction Exonucleolytic cleavage in either 5'- to 3'- or 3'- to 5'-direction to yield nucleoside 5'-phosphates.. Bidirectionally degrades single-stranded DNA into large acid-insoluble oligonucleotides, which are then degraded further into small acid-soluble oligonucleotides. The protein is Exodeoxyribonuclease 7 large subunit of Yersinia pseudotuberculosis serotype O:3 (strain YPIII).